A 252-amino-acid polypeptide reads, in one-letter code: Major prion protein (252 aa).

The signal sequence occupies residues 1–22 (MANLGCWMLFLFVATWSDLGLC). Residues 23–38 (KKRPKPGGWNTGGSRY) are interaction with ADGRG6. Residues 23–229 (KKRPKPGGWN…ESQAYYQRGS (207 aa)) are interaction with GRB2, ERI3 and SYN1. Positions 26 to 106 (PKPGGWNTGG…QWNKPSKPKT (81 aa)) are disordered. A run of 5 repeats spans residues 51–58 (PQGGGWGQ), 59–66 (PHGGGWGQ), 67–74 (PHGGGWGQ), 75–82 (PHGGGWGQ), and 83–90 (PHGGGWGQ). The interval 51 to 90 (PQGGGWGQPHGGGWGQPHGGGWGQPHGGGWGQPHGGGWGQ) is 5 X 8 AA tandem repeats of P-H-G-G-G-W-G-Q. The span at 52-94 (QGGGWGQPHGGGWGQPHGGGWGQPHGGGWGQPHGGGWGQGGGT) shows a compositional bias: gly residues. Positions 60, 61, 62, 68, 69, 70, 76, 77, 78, 84, 85, and 86 each coordinate Cu(2+). The cysteines at positions 178 and 213 are disulfide-linked. N-linked (GlcNAc...) asparagine glycans are attached at residues Asn180 and Asn196. Ser229 carries GPI-anchor amidated serine lipidation. A propeptide spans 230–252 (SMVLFSSPPVILLISFLIFLIVG) (removed in mature form).

This sequence belongs to the prion family. As to quaternary structure, monomer and homodimer. Has a tendency to aggregate into amyloid fibrils containing a cross-beta spine, formed by a steric zipper of superposed beta-strands. Soluble oligomers may represent an intermediate stage on the path to fibril formation. Copper binding may promote oligomerization. Interacts with GRB2, APP, ERI3/PRNPIP and SYN1. Mislocalized cytosolically exposed PrP interacts with MGRN1; this interaction alters MGRN1 subcellular location and causes lysosomal enlargement. Interacts with APP. Interacts with KIAA1191. Interacts with ADGRG6.

The protein localises to the cell membrane. The protein resides in the golgi apparatus. In terms of biological role, its primary physiological function is unclear. May play a role in neuronal development and synaptic plasticity. May be required for neuronal myelin sheath maintenance. May promote myelin homeostasis through acting as an agonist for ADGRG6 receptor. May play a role in iron uptake and iron homeostasis. Soluble oligomers are toxic to cultured neuroblastoma cells and induce apoptosis (in vitro). Association with GPC1 (via its heparan sulfate chains) targets PRNP to lipid rafts. Also provides Cu(2+) or Zn(2+) for the ascorbate-mediated GPC1 deaminase degradation of its heparan sulfate side chains. In Callithrix jacchus (White-tufted-ear marmoset), this protein is Major prion protein (PRNP).